The primary structure comprises 159 residues: Large ribosomal subunit protein uL30 (159 aa).

This sequence belongs to the universal ribosomal protein uL30 family. As to quaternary structure, part of the 50S ribosomal subunit.

This Aeropyrum pernix (strain ATCC 700893 / DSM 11879 / JCM 9820 / NBRC 100138 / K1) protein is Large ribosomal subunit protein uL30.